A 149-amino-acid polypeptide reads, in one-letter code: Inner membrane protein YidI (149 aa).

The Cytoplasmic portion of the chain corresponds to 1 to 8 (MGIIAQNK). The chain crosses the membrane as a helical span at residues 9-31 (ISSLGMLFGAIALMMGIIHFSFG). Residues 32–77 (PFSAPPPTFESIVADKTAEIKRGLLAGIKGEKITTVEKKEDVDVDK) lie on the Periplasmic side of the membrane. A helical transmembrane segment spans residues 78 to 97 (ILNQSGIALAIAALLCAFIG). Over 98–117 (GMRKENRWGIRGALVFGGGT) the chain is Cytoplasmic. The helical transmembrane segment at 118–140 (LAFHTLLFGIGIVCSILLIFLIF) threads the bilayer. Topologically, residues 141–149 (SFLTGGSLV) are periplasmic.

It localises to the cell inner membrane. In Escherichia coli (strain K12), this protein is Inner membrane protein YidI (yidI).